A 447-amino-acid chain; its full sequence is Asparagine--tRNA ligase (447 aa).

It belongs to the class-II aminoacyl-tRNA synthetase family. Homodimer.

Its subcellular location is the cytoplasm. It catalyses the reaction tRNA(Asn) + L-asparagine + ATP = L-asparaginyl-tRNA(Asn) + AMP + diphosphate + H(+). This Streptococcus pneumoniae (strain ATCC BAA-255 / R6) protein is Asparagine--tRNA ligase.